The primary structure comprises 221 residues: uncharacterized protein (221 aa).

The next 5 helical transmembrane spans lie at 2–22 (FIAKSIVIGLLICVLFFFFFV), 34–54 (LLTLGLLNASLTALSDLLAQA), 97–117 (AYGLCLTPIQFRWFVALSNVI), 131–151 (ALDQFIFAPLGIVFFFLFMGI), and 177–197 (ILWPAVQLFNFTFVPLVLQVI).

It belongs to the peroxisomal membrane protein PXMP2/4 family.

It localises to the membrane. This is an uncharacterized protein from Schizosaccharomyces pombe (strain 972 / ATCC 24843) (Fission yeast).